The following is a 441-amino-acid chain: FAM10 family protein At4g22670 (441 aa).

Residues 41–114 (KIPTGVHEED…PQKMGDSSVE (74 aa)) form a disordered region. Over residues 46 to 55 (VHEEDKDTKP) the composition is skewed to basic and acidic residues. 2 stretches are compositionally biased toward acidic residues: residues 61-71 (EESDDDMDETE) and 78-102 (EEEE…EPDN). 2 positions are modified to phosphoserine: Ser-63 and Ser-89. TPR repeat units follow at residues 121 to 156 (EAAQ…NPTS), 158 to 190 (IMYG…NPDS), and 191 to 224 (AKGY…DYDE). A coiled-coil region spans residues 236–285 (NAHKLEEHRRKYDRLRKEREDKKAERDRLRRRAEAQAAYDKAKKEEQSSS). The span at 244–282 (RRKYDRLRKEREDKKAERDRLRRRAEAQAAYDKAKKEEQ) shows a compositional bias: basic and acidic residues. The segment at 244–314 (RRKYDRLRKE…MPGGFPGGMG (71 aa)) is disordered. Residues 289 to 314 (SGGGFPGGMPGGFPGGMPGGFPGGMG) are compositionally biased toward gly residues. One can recognise an STI1 domain in the interval 391-430 (DPELMTAFSDPEVMAALQDVMKNPANLAKHQANPKVAPVI).

The protein belongs to the FAM10 family.

The sequence is that of FAM10 family protein At4g22670 from Arabidopsis thaliana (Mouse-ear cress).